A 660-amino-acid polypeptide reads, in one-letter code: DNA topoisomerase I, plasmid (660 aa).

The Toprim domain maps to Met-1–Ala-110. The Mg(2+) site is built by Glu-7 and Asp-79. One can recognise a Topo IA-type catalytic domain in the interval Asp-124–Leu-550. Residues Ser-158–Gln-163 are interaction with DNA. Tyr-287 serves as the catalytic O-(5'-phospho-DNA)-tyrosine intermediate. 2 C4-type zinc fingers span residues Cys-563–Cys-589 and Cys-613–Cys-643.

The protein belongs to the type IA topoisomerase family. In terms of assembly, monomer. It depends on Mg(2+) as a cofactor.

It carries out the reaction ATP-independent breakage of single-stranded DNA, followed by passage and rejoining.. Releases the supercoiling and torsional tension of DNA, which is introduced during the DNA replication and transcription, by transiently cleaving and rejoining one strand of the DNA duplex. Introduces a single-strand break via transesterification at a target site in duplex DNA. The scissile phosphodiester is attacked by the catalytic tyrosine of the enzyme, resulting in the formation of a DNA-(5'-phosphotyrosyl)-enzyme intermediate and the expulsion of a 3'-OH DNA strand. The free DNA strand then undergoes passage around the unbroken strand, thus removing DNA supercoils. Finally, in the religation step, the DNA 3'-OH attacks the covalent intermediate to expel the active-site tyrosine and restore the DNA phosphodiester backbone. The protein is DNA topoisomerase I, plasmid of Xylella fastidiosa (strain 9a5c).